Here is a 156-residue protein sequence, read N- to C-terminus: Ribosomal RNA large subunit methyltransferase H (156 aa).

Residues L73, G104, and 123-128 (LSPLTL) contribute to the S-adenosyl-L-methionine site.

The protein belongs to the RNA methyltransferase RlmH family. Homodimer.

The protein resides in the cytoplasm. It carries out the reaction pseudouridine(1915) in 23S rRNA + S-adenosyl-L-methionine = N(3)-methylpseudouridine(1915) in 23S rRNA + S-adenosyl-L-homocysteine + H(+). In terms of biological role, specifically methylates the pseudouridine at position 1915 (m3Psi1915) in 23S rRNA. This Hahella chejuensis (strain KCTC 2396) protein is Ribosomal RNA large subunit methyltransferase H.